Consider the following 416-residue polypeptide: 4-hydroxy-3-methylbut-2-en-1-yl diphosphate synthase (flavodoxin) (416 aa).

4 residues coordinate [4Fe-4S] cluster: cysteine 304, cysteine 307, cysteine 350, and glutamate 357.

The protein belongs to the IspG family. It depends on [4Fe-4S] cluster as a cofactor.

The enzyme catalyses (2E)-4-hydroxy-3-methylbut-2-enyl diphosphate + oxidized [flavodoxin] + H2O + 2 H(+) = 2-C-methyl-D-erythritol 2,4-cyclic diphosphate + reduced [flavodoxin]. It participates in isoprenoid biosynthesis; isopentenyl diphosphate biosynthesis via DXP pathway; isopentenyl diphosphate from 1-deoxy-D-xylulose 5-phosphate: step 5/6. Converts 2C-methyl-D-erythritol 2,4-cyclodiphosphate (ME-2,4cPP) into 1-hydroxy-2-methyl-2-(E)-butenyl 4-diphosphate. This chain is 4-hydroxy-3-methylbut-2-en-1-yl diphosphate synthase (flavodoxin), found in Rhizobium leguminosarum bv. trifolii (strain WSM2304).